A 414-amino-acid polypeptide reads, in one-letter code: Protein ABHD18 (414 aa).

The first 24 residues, 1 to 24, serve as a signal peptide directing secretion; it reads MGVSKLDILYRRLLLTKLFIRGWG. Asparagine 282 and asparagine 307 each carry an N-linked (GlcNAc...) asparagine glycan.

It belongs to the AB hydrolase superfamily.

The protein resides in the secreted. This chain is Protein ABHD18, found in Homo sapiens (Human).